A 458-amino-acid chain; its full sequence is Argininosuccinate lyase (458 aa).

The protein belongs to the lyase 1 family. Argininosuccinate lyase subfamily.

Its subcellular location is the cytoplasm. It carries out the reaction 2-(N(omega)-L-arginino)succinate = fumarate + L-arginine. Its pathway is amino-acid biosynthesis; L-arginine biosynthesis; L-arginine from L-ornithine and carbamoyl phosphate: step 3/3. This Neisseria gonorrhoeae (strain ATCC 700825 / FA 1090) protein is Argininosuccinate lyase.